A 201-amino-acid chain; its full sequence is MTDFALNAEVRSDLGKGASRRLRRNVSMVPAVIYGGDKAPQSISLLAKDLAKLLENEAAFSHVLAVNVAGATENVVIKALQRHPAKGFVLHADFQRVVAGQKLTAHVPLHFINEATAVGVKQQGGEISHTINEVEVSCLPKDLPEFIEVDMAAVEVGQTVHMSDLKLPKGVELVALAHGNDLAVSNIHASRVKAEDEGAAE.

This sequence belongs to the bacterial ribosomal protein bL25 family. CTC subfamily. As to quaternary structure, part of the 50S ribosomal subunit; part of the 5S rRNA/L5/L18/L25 subcomplex. Contacts the 5S rRNA. Binds to the 5S rRNA independently of L5 and L18.

In terms of biological role, this is one of the proteins that binds to the 5S RNA in the ribosome where it forms part of the central protuberance. This Ectopseudomonas mendocina (strain ymp) (Pseudomonas mendocina) protein is Large ribosomal subunit protein bL25.